Here is a 315-residue protein sequence, read N- to C-terminus: MIIVAVLLSFLAHLLVQASQPWKALDAEQALYVYKRCYEDHLPSGSDRKTYMTLWNAWRLEPNDAITHCYAKCVLTGLQIYDPQENAFKSDRIPVQYQAYKTITQSKQKEVTEYQKALAAANAKSGSCVDLYNAYLPVHNRFVNLSRQLYHGTVEGAAKIYAAMPEIKQKGESFHAYCEKRAWKGNKQSEWKNGRRYKLTGSPELKDAIDCIFRGLRYMDDTGLKVDEIVRDFNLINKSELEPEVRSVLASCKGSEAYDYYVCLVNSRLKQHFKNAFDFHELRSADYAYLLRGKVYENPEKVKEEMKKLNTTVHF.

Positions 1-18 are cleaved as a signal peptide; it reads MIIVAVLLSFLAHLLVQA. 2 cysteine pairs are disulfide-bonded: C37-C73 and C69-C128. Residue W55 participates in thromboxane A2 binding. A leukotriene C4-binding site is contributed by W58. Y70 lines the thromboxane A2 pocket. Leukotriene C4-binding residues include G152 and K170. Thromboxane A2 is bound at residue K170. 2 cysteine pairs are disulfide-bonded: C178–C211 and C252–C263.

This sequence belongs to the PBP/GOBP family. Distal-lateral and median lobes of female salivary gland (at protein level). Not detected in male salivary gland (at protein level). Expressed in female salivary gland. Not detected in female carcass without salivary glands. Expressed in male salivary gland and other tissues.

The protein localises to the secreted. Its function is as follows. Modulates blood feeding of female mosquitoes on vertebrate species by binding and sequestering different mediators involved in the host response. Binds leukotriene C4, leukotriene D4, leukotriene E4 and stable analogs of thromboxane A2, U-46619 and carbocyclic TXA2. Binds weakly prostaglandins: PGD2, PGE2 and PGF2alpha. Does not bind leukotriene B4, biogenic amines, ADP, platelet activating phospholipid derivative PAF and arachidonic acid. Inhibits agonist-induced smooth muscle contraction. Inhibits platelet aggregation induced by low concentrations of collagen in thromboxane A2-dependent manner. The protein is Long form salivary protein D7L1 of Anopheles stephensi (Indo-Pakistan malaria mosquito).